We begin with the raw amino-acid sequence, 271 residues long: SVPGDPIDILWQQLAILKQLIAHSAGRLRLCLSAADIERCREDKVLAMVAHIEGAGGFDGEGRDLQAFYAAGVRSIGPFWNIANRFGSGVNGSFPGSPDTGPGLTAAGIDLIKQVNALKMQIDVSHMNEKAFWDTAHHATSPLVATHSNAHALCPQPRNLTDQQLRAIRDSGGVVGVNFGNAFLRADGRRDSDTPLTTIVRHIDYLINIMGEDHVALGSDFDGITLPDELGDVAGLPRLINTLRASGYDQLVLDKLLWRNWLRVLKNVWQQ.

This sequence belongs to the metallo-dependent hydrolases superfamily. Peptidase M19 family.

This is an uncharacterized protein from Klebsiella pneumoniae.